The primary structure comprises 303 residues: MKKKILFWVLGILGVLIIGGGIYAYNVYSSVSNTLKEVHQPLKRDQNNSNVGEKVSKSEPVSILLLGADERGDDKGRSDSLMVITLNPKNNSMKTVSIPRDTYTEIVGKGKSDKINHAYAFGGVDMSVATVEKFLDVPINYYIEVNMEGFKDIVDAVGGVDVTNDLEFTQDGHHFAKGNIHLTGDQALAFTRMRKQDPRGDFGRQMRQRQVMQGVIKKGASFSSLTGYGDVLAAIQKNVKTNLTQDQMFDMQKNYKDCLKNSEDIQIPGDGHKAADGIWYYYVPDAAKQDLTNKLRSHLEVTK.

Topologically, residues 1–4 (MKKK) are cytoplasmic. Residues 5–25 (ILFWVLGILGVLIIGGGIYAY) form a helical; Signal-anchor for type II membrane protein membrane-spanning segment. The Extracellular segment spans residues 26–303 (NVYSSVSNTL…KLRSHLEVTK (278 aa)).

The protein belongs to the LytR/CpsA/Psr (LCP) family.

Its subcellular location is the cell membrane. It participates in cell wall biogenesis. May catalyze the final step in cell wall teichoic acid biosynthesis, the transfer of the anionic cell wall polymers (APs) from their lipid-linked precursor to the cell wall peptidoglycan (PG). The sequence is that of Polyisoprenyl-teichoic acid--peptidoglycan teichoic acid transferase TagU from Bacillus cereus (strain AH820).